Here is a 258-residue protein sequence, read N- to C-terminus: MVLIRVLANLLILQLSYAQKSSELVFGGRPCNINEHRSLVVLFNSSGFLCGGTLINQDWVVTAAHCDSENFQLLFGVHSKKILNEDEQTRDPKEKFFCPNRKNDDEVDKDIMLIKLDSSVSNSTHIAPLSLPSSPPSVGSVCRIMGWGKTIPTKEIYPDVPHCANINILDHAVCRAAYSWRTVANTTLCAGILQGGKDTCHADSGGPLICNGQVQGIVSWGGHPCGQPREPGVYTKVLDYNDWVQSIIAGNTEATCPP.

An N-terminal signal peptide occupies residues 1-18; the sequence is MVLIRVLANLLILQLSYA. The propeptide occupies 19–24; sequence QKSSEL. The Peptidase S1 domain maps to 25–249; sequence VFGGRPCNIN…YNDWVQSIIA (225 aa). Intrachain disulfides connect cysteine 31–cysteine 163, cysteine 50–cysteine 66, cysteine 98–cysteine 256, cysteine 142–cysteine 210, cysteine 174–cysteine 189, and cysteine 200–cysteine 225. A glycan (N-linked (GlcNAc...) asparagine) is linked at asparagine 44. Active-site charge relay system residues include histidine 65 and aspartate 110. 2 N-linked (GlcNAc...) asparagine glycosylation sites follow: asparagine 122 and asparagine 185. Serine 204 serves as the catalytic Charge relay system.

The protein belongs to the peptidase S1 family. Snake venom subfamily. In terms of assembly, monomer. Expressed by the venom gland.

The protein localises to the secreted. Inhibited by PMSF at 2 mM concentration but not by EDTA. Functionally, snake venom serine protease that may act in the hemostasis system of the prey. Has weak fibrinogen clotting activity. Possesses amidolysis activity towards S-2251 (substrate for plasmin) but has no hydrolytic activity with S-2302 (plasma kallikrein substrate) or S-2238 (thrombin substrate). The polypeptide is Snake venom serine protease 2 (Protobothrops jerdonii (Jerdon's pitviper)).